Here is a 203-residue protein sequence, read N- to C-terminus: CASP-like protein 2U2 (203 aa).

Residues 1-21 form a disordered region; that stretch reads MGGFVDDGAAGLAPSHGSSRA. The Cytoplasmic segment spans residues 1 to 27; sequence MGGFVDDGAAGLAPSHGSSRAGRGLEG. The chain crosses the membrane as a helical span at residues 28-48; that stretch reads AGVFLRFVASLLSIAGLMLLV. At 49-73 the chain is on the extracellular side; that stretch reads KDNQTVQQMVATEAVTLETKYSDIS. A glycan (N-linked (GlcNAc...) asparagine) is linked at N51. The helical transmembrane segment at 74–94 threads the bilayer; sequence AFVFLLYTNGLVAVYCFFLAL. Residues 95–108 lie on the Cytoplasmic side of the membrane; sequence ASVFSLIASARSGK. Residues 109-129 traverse the membrane as a helical segment; that stretch reads LAGWVTFVLDQGLAYVLLAAA. The Extracellular portion of the chain corresponds to 130 to 163; it reads AASTEVLYLAENGDLKTSWAEICSQFGHFCHMAR. Residues 164–184 form a helical membrane-spanning segment; the sequence is ASIVVSFLSMLAMAVLSVMSA. The Cytoplasmic segment spans residues 185–203; sequence QQLFSKYRRPMTAKTAQDI.

Belongs to the Casparian strip membrane proteins (CASP) family. In terms of assembly, homodimer and heterodimers.

It localises to the cell membrane. The polypeptide is CASP-like protein 2U2 (Osmunda lancea (Fern)).